We begin with the raw amino-acid sequence, 425 residues long: Ribulose bisphosphate carboxylase (425 aa).

The active-site Proton acceptor is lysine 153. Substrate is bound at residue lysine 155. Mg(2+) is bound by residues lysine 179, aspartate 181, and glutamate 182. Lysine 179 carries the N6-carboxylysine modification. Histidine 269 acts as the Proton acceptor in catalysis. Substrate contacts are provided by residues arginine 270, histidine 302, 353 to 355 (SGG), and 375 to 378 (QAGG).

Belongs to the RuBisCO large chain family. Type III subfamily. In terms of assembly, homodimer. In contrast to form I RuBisCO, the form III RuBisCO is composed solely of large subunits. It depends on Mg(2+) as a cofactor.

It carries out the reaction 2 (2R)-3-phosphoglycerate + 2 H(+) = D-ribulose 1,5-bisphosphate + CO2 + H2O. The catalysed reaction is D-ribulose 1,5-bisphosphate + O2 = 2-phosphoglycolate + (2R)-3-phosphoglycerate + 2 H(+). Reversibly inhibited by O(2). Catalyzes the addition of molecular CO(2) and H(2)O to ribulose 1,5-bisphosphate (RuBP), generating two molecules of 3-phosphoglycerate (3-PGA). Functions in an archaeal AMP degradation pathway, together with AMP phosphorylase and R15P isomerase. This is Ribulose bisphosphate carboxylase from Methanocaldococcus jannaschii (strain ATCC 43067 / DSM 2661 / JAL-1 / JCM 10045 / NBRC 100440) (Methanococcus jannaschii).